The primary structure comprises 770 residues: DEAD-box ATP-dependent RNA helicase 24 (770 aa).

A disordered region spans residues 1 to 106 (MSKRPKLGGF…ADSDDEDDPV (106 aa)). Polar residues predominate over residues 14 to 26 (RPTSYSFERSQPP). Over residues 34–43 (DDPDLDDIAF) the composition is skewed to acidic residues. Low complexity predominate over residues 44–55 (SDDAAAPSDAPP). Positions 219–247 (KSFADCGFPVQLMNAIAKQGYEKPTTIQC) match the Q motif motif. Residues 250–425 (LPIVLSGRDI…REILTDPIRV (176 aa)) enclose the Helicase ATP-binding domain. 263-270 (AKTGSGKT) lines the ATP pocket. Residues 373–376 (DEAD) carry the DEAD box motif. Residues 436-599 (DIKQVVNVLP…DVPNELMDLA (164 aa)) form the Helicase C-terminal domain. The segment covering 604-613 (RFRANRDSRK) has biased composition (basic and acidic residues). Disordered stretches follow at residues 604–640 (RFRA…RGRG), 683–704 (VSAS…PSSF), and 729–770 (LPAP…GWDR). Residues 621-635 (GKGGGGGGGGGSGAR) are compositionally biased toward gly residues. Low complexity predominate over residues 683–697 (VSASSSNTPSNSAPS). Residues 744-753 (TVENANPNPE) are compositionally biased toward polar residues. Over residues 754–770 (SSRDRTRERKRPSGWDR) the composition is skewed to basic and acidic residues.

It belongs to the DEAD box helicase family.

It catalyses the reaction ATP + H2O = ADP + phosphate + H(+). This Oryza sativa subsp. japonica (Rice) protein is DEAD-box ATP-dependent RNA helicase 24.